Consider the following 210-residue polypeptide: ATP-dependent Clp protease proteolytic subunit (210 aa).

The Nucleophile role is filled by Ser-107. The active site involves His-132.

The protein belongs to the peptidase S14 family. As to quaternary structure, fourteen ClpP subunits assemble into 2 heptameric rings which stack back to back to give a disk-like structure with a central cavity, resembling the structure of eukaryotic proteasomes.

The protein resides in the cytoplasm. The enzyme catalyses Hydrolysis of proteins to small peptides in the presence of ATP and magnesium. alpha-casein is the usual test substrate. In the absence of ATP, only oligopeptides shorter than five residues are hydrolyzed (such as succinyl-Leu-Tyr-|-NHMec, and Leu-Tyr-Leu-|-Tyr-Trp, in which cleavage of the -Tyr-|-Leu- and -Tyr-|-Trp bonds also occurs).. Cleaves peptides in various proteins in a process that requires ATP hydrolysis. Has a chymotrypsin-like activity. Plays a major role in the degradation of misfolded proteins. The sequence is that of ATP-dependent Clp protease proteolytic subunit from Cereibacter sphaeroides (strain ATCC 17029 / ATH 2.4.9) (Rhodobacter sphaeroides).